A 186-amino-acid polypeptide reads, in one-letter code: Ribosome-recycling factor (186 aa).

Belongs to the RRF family.

The protein resides in the cytoplasm. In terms of biological role, responsible for the release of ribosomes from messenger RNA at the termination of protein biosynthesis. May increase the efficiency of translation by recycling ribosomes from one round of translation to another. The protein is Ribosome-recycling factor of Rickettsia rickettsii (strain Iowa).